The sequence spans 2276 residues: Protein Ycf2 (2276 aa).

An ATP-binding site is contributed by 1621–1628 (GSIGTGRS).

Belongs to the Ycf2 family.

The protein resides in the plastid. It is found in the chloroplast stroma. Probable ATPase of unknown function. Its presence in a non-photosynthetic plant (Epifagus virginiana) and experiments in tobacco indicate that it has an essential function which is probably not related to photosynthesis. This Guizotia abyssinica (Niger) protein is Protein Ycf2.